A 575-amino-acid chain; its full sequence is Cyclic nucleotide-gated channel alpha-4 (575 aa).

Residues 1-38 are Cytoplasmic-facing; it reads MSQDGKVKTTESTPPAPTKARKWLPVLDPSGDYYYWWL. Residues 39-60 traverse the membrane as a helical segment; that stretch reads NTMVFPIMYNLIIVVCRACFPD. At 61-70 the chain is on the extracellular side; that stretch reads LQHSYLVAWF. Residues 71–91 traverse the membrane as a helical segment; that stretch reads VLDYTSDLLYLLDIGVRFHTG. Over 92 to 116 the chain is Cytoplasmic; that stretch reads FLEQGILVVDKGMIASRYVRTWSFL. Residues 117-135 form a helical membrane-spanning segment; sequence LDLASLVPTDAAYVQLGPH. Residues 136–140 lie on the Extracellular side of the membrane; the sequence is IPTLR. A helical transmembrane segment spans residues 141–159; that stretch reads LNRFLRVPRLFEAFDRTET. The Cytoplasmic segment spans residues 160–166; sequence RTAYPNA. Positions 164-272 are ion conduction pathway; the sequence is PNAFRIAKLM…GSMSSVIYNM (109 aa). A helical transmembrane segment spans residues 167–190; that stretch reads FRIAKLMLYIFVVIHWNSCLYFAL. The Extracellular segment spans residues 191-213; that stretch reads SRYLGFGRDAWVYPDPAQPGFER. 2 consecutive transmembrane segments (helical) span residues 214-248 and 249-273; these read LRRQ…LFMV and GDFL…YNMN. Positions 231 to 234 are selectivity filter; sequence TVGD. Positions 274-350 are C-linker; it reads TADAAFYPDH…STLSRVQIFQ (77 aa). At 274–575 the chain is on the cytoplasmic side; the sequence is TADAAFYPDH…AGQAGPSGIE (302 aa). The IQ-type motif lies at 292–302; that stretch reads LQHVNKRLERR. Residue 348-471 coordinates a nucleoside 3',5'-cyclic phosphate; the sequence is IFQNCEASLL…AVMEEKGREI (124 aa). The interval 354–474 is cyclic nucleotide-binding domain; sequence ASLLEELVLK…EEKGREILLK (121 aa). The 3',5'-cyclic GMP site is built by G414, S417, R430, and T431. 3',5'-cyclic AMP-binding residues include R430 and T431. Residues 493-547 adopt a coiled-coil conformation; that stretch reads TESRLKGLDQQLDDLQTKFARLLAELESSALKIAYRIERLEWQTREWPMPEDMGE. The interval 537 to 575 is disordered; it reads REWPMPEDMGEADDEAEPGEGTSKDGEGKAGQAGPSGIE. A compositionally biased stretch (acidic residues) spans 544 to 554; that stretch reads DMGEADDEAEP.

Belongs to the cyclic nucleotide-gated cation channel (TC 1.A.1.5) family. CNGA4 subfamily. The olfactory cyclic nucleotide-gated channel is an heterotetramer composed of CNGA2, CNGA4 and CNGB1b subunits with 2:1:1 stoichiometry. May form homomeric channels gated by nitric oxide. N-glycosylated. As to expression, olfactory neurons. Expressed in olfactory sensory cilia (at protein level).

The protein resides in the cell projection. The protein localises to the cilium membrane. It catalyses the reaction Ca(2+)(in) = Ca(2+)(out). The catalysed reaction is Na(+)(in) = Na(+)(out). It carries out the reaction K(+)(in) = K(+)(out). The enzyme catalyses NH4(+)(in) = NH4(+)(out). It catalyses the reaction Rb(+)(in) = Rb(+)(out). The catalysed reaction is Li(+)(in) = Li(+)(out). It carries out the reaction Cs(+)(in) = Cs(+)(out). With respect to regulation, ca(2+)-calmodulin exerts its inhibitory effect in cAMP sensitivity by binding to IQ-like motif of CNGA4 and preferably binds to the channel in the closed state. Inhibition by PIP3 of the CNG channel probably occurs via CGNA2 binding. Ca(2+) currents are inhibited by pimozide, an L-type Ca(2+) channel blocker. In terms of biological role, pore-forming subunit of the olfactory cyclic nucleotide-gated channel. Operates in the cilia of olfactory sensory neurons where chemical stimulation of the odorant is converted to an electrical signal. Mediates odorant-induced cAMP-dependent Ca(2+) influx triggering neuron depolarization. The rise of intracellular Ca(2+) levels potentiates the olfactory response by activating Ca(2+)-dependent Cl(-) channels, but it also serves as a negative feedback signal to desensitize the channel for rapid adaptation to odorants. Conducts cAMP- and cGMP-gated ion currents, with permeability for monovalent and divalent cations. May conduct nitric oxide-gated Ca(2+) currents relevant to neurons of vomeronasal organ, a system involved in the perception of pheromones. This is Cyclic nucleotide-gated channel alpha-4 from Rattus norvegicus (Rat).